The primary structure comprises 286 residues: Shikimate dehydrogenase (NADP(+)) (286 aa).

Residues Ser22–Ser24 and Thr71 contribute to the shikimate site. Lys75 (proton acceptor) is an active-site residue. Glu87 is an NADP(+) binding site. Shikimate-binding residues include Asn96 and Asp111. Residues Gly136–Ala140, Asn160–Arg165, and Ile225 each bind NADP(+). Tyr227 serves as a coordination point for shikimate. Gly248 is a binding site for NADP(+).

The protein belongs to the shikimate dehydrogenase family. In terms of assembly, homodimer.

The catalysed reaction is shikimate + NADP(+) = 3-dehydroshikimate + NADPH + H(+). It participates in metabolic intermediate biosynthesis; chorismate biosynthesis; chorismate from D-erythrose 4-phosphate and phosphoenolpyruvate: step 4/7. In terms of biological role, involved in the biosynthesis of the chorismate, which leads to the biosynthesis of aromatic amino acids. Catalyzes the reversible NADPH linked reduction of 3-dehydroshikimate (DHSA) to yield shikimate (SA). This is Shikimate dehydrogenase (NADP(+)) from Rhizobium meliloti (strain 1021) (Ensifer meliloti).